A 1050-amino-acid polypeptide reads, in one-letter code: Nuclear pore complex-interacting protein family member B3 (1050 aa).

A helical transmembrane segment spans residues 63–87 (VIIAFPTSYKVVITLWIVYLWVSLL). Disordered regions lie at residues 241 to 262 (NRMG…NSLS), 290 to 574 (LTPL…NIKT), and 785 to 1050 (ERLR…RRLS). Residues 252–262 (QQHSITDNSLS) are compositionally biased toward polar residues. Over residues 349-359 (PLPPSALPSAP) the composition is skewed to pro residues. Composition is skewed to basic and acidic residues over residues 406–416 (DNIKTPAERLR), 448–458 (DNIKTPAERLR), 490–500 (DNIKTPAERLR), 528–538 (DNIKTPAERLR), 820–830 (DNIKTPAERLR), 862–872 (DNIKTPAERLR), and 904–914 (DNIKTPAERLR).

It belongs to the NPIP family.

The protein resides in the membrane. The chain is Nuclear pore complex-interacting protein family member B3 (NPIPB3) from Homo sapiens (Human).